Reading from the N-terminus, the 319-residue chain is Extracellular phospholipase A1 (319 aa).

Positions 1-24 (MSMPLSFTSAVSPVAAIPTPRAAA) are cleaved as a signal peptide.

It catalyses the reaction a 1,2-diacyl-sn-glycero-3-phosphocholine + H2O = a 2-acyl-sn-glycero-3-phosphocholine + a fatty acid + H(+). The chain is Extracellular phospholipase A1 (phlA) from Serratia liquefaciens.